Consider the following 90-residue polypeptide: Small ribosomal subunit protein uS15 (90 aa).

This sequence belongs to the universal ribosomal protein uS15 family. In terms of assembly, part of the 30S ribosomal subunit. Forms a bridge to the 50S subunit in the 70S ribosome, contacting the 23S rRNA.

One of the primary rRNA binding proteins, it binds directly to 16S rRNA where it helps nucleate assembly of the platform of the 30S subunit by binding and bridging several RNA helices of the 16S rRNA. Its function is as follows. Forms an intersubunit bridge (bridge B4) with the 23S rRNA of the 50S subunit in the ribosome. The sequence is that of Small ribosomal subunit protein uS15 from Campylobacter jejuni subsp. doylei (strain ATCC BAA-1458 / RM4099 / 269.97).